Here is a 378-residue protein sequence, read N- to C-terminus: Chlorophyll synthase, chloroplastic (378 aa).

The transit peptide at 1-45 (MATSHPLAAAAATSSSSATFRPPLRFLSSPPSSLTLNRRRSFPVV) directs the protein to the chloroplast. 7 helical membrane-spanning segments follow: residues 173–193 (VITQ…LLDI), 199–219 (FPII…YSAP), 232–252 (FALG…LFGT), 257–277 (IVVL…VNDF), 302–322 (WICV…LLST), 327–347 (YALA…QYFL), and 357–377 (YQAS…LATS).

It belongs to the UbiA prenyltransferase family. Chlorophyll synthase subfamily. The cofactor is Mg(2+). Zn(2+) is required as a cofactor. Mn(2+) serves as cofactor.

It is found in the plastid. It localises to the chloroplast membrane. It catalyses the reaction phytyl diphosphate + chlorophyllide a + H(+) = chlorophyll a + diphosphate. Inhibited by N-phenylmaleimide (NPM) and diacetyl. Its function is as follows. Involved in one of the last steps of the biosynthesis of chlorophyll a. Catalyzes the esterification of chlorophillide a with either geranylgeranyldiphosphate (GGPP) or phytyldiphosphate (PhyPP). May also use with a lower efficiency the monophosphates GGMP and PhyMP, but not the non-phosphorylated alcohols geranylgeraniol and phytol. The tetraprenyl diphosphate must bind to the enzyme as the first substrate and esterification occurs when this pre-loaded enzyme meets the second substrate, chlorophyllide. The chain is Chlorophyll synthase, chloroplastic (CHLG) from Avena sativa (Oat).